A 336-amino-acid polypeptide reads, in one-letter code: Probable magnesium transporter NIPA2 (336 aa).

Residues 1–7 (MEEMSPD) lie on the Extracellular side of the membrane. The chain crosses the membrane as a helical span at residues 8 to 28 (NIHGVILAVSSSIFIGSSFII). Topologically, residues 29-55 (KKKGLKKAGVSGARAGEGGYGYLYEPW) are cytoplasmic. Residues 56–76 (WWAGMITMIVGEIANFAAYAF) traverse the membrane as a helical segment. Topologically, residues 77-79 (APA) are extracellular. A helical transmembrane segment spans residues 80 to 100 (ILVTPLGALSIIFSAVLAHFI). Residues 101-104 (LEEK) are Cytoplasmic-facing. A helical membrane pass occupies residues 105 to 125 (LHMFGILGCVLCVVGSTTIVL). At 126-145 (HAPHEQGIESVKQVWHLATE) the chain is on the extracellular side. A helical transmembrane segment spans residues 146–166 (PGFLAYSAVVLVVVLALIFYY). The Cytoplasmic portion of the chain corresponds to 167 to 179 (EPRYGKTHMIVYV). Residues 180–200 (GICSLMGSLTVMSVKAVAIAI) form a helical membrane-spanning segment. At 201-212 (KLTFSGMNQFKY) the chain is on the extracellular side. The chain crosses the membrane as a helical span at residues 213-233 (FHAWIFIIVVTICCILQINYL). Topologically, residues 234 to 244 (NKALDNFNTAV) are cytoplasmic. The chain crosses the membrane as a helical span at residues 245–265 (ISPVYYVMFTTFTILASMIMF). Residues 266-272 (KDWASQS) lie on the Extracellular side of the membrane. A helical membrane pass occupies residues 273–293 (GLQIATELCGFVTILSGTFLL). At 294 to 336 (HKTKDMGNSTSLRGSTSHSPRDTPVFINSGSSRSSNSTRPAIL) the chain is on the cytoplasmic side. A disordered region spans residues 303 to 336 (TSLRGSTSHSPRDTPVFINSGSSRSSNSTRPAIL). A compositionally biased stretch (low complexity) spans 321–330 (NSGSSRSSNS).

The protein belongs to the NIPA (TC 2.A.7) family. Homodimer.

The protein localises to the cell membrane. The protein resides in the early endosome. In terms of biological role, acts as a Mg(2+) transporter. Can also transport other divalent cations such as Fe(2+), Sr(2+), Ba(2+), Mn(2+) and Co(2+) but to a much less extent than Mg(2+). This Arabidopsis thaliana (Mouse-ear cress) protein is Probable magnesium transporter NIPA2.